Here is a 659-residue protein sequence, read N- to C-terminus: Checkpoint protein RAD24 (659 aa).

A disordered region spans residues 24-54; that stretch reads TKWSSSRPTSPVRKARSTENDFLSKQDTSSI. ATP is bound at residue 109-116; it reads GPSGCSKS. Acidic residues predominate over residues 596-612; sequence EDEETSFNDDPIVDSDS. The interval 596–659 is disordered; sequence EDEETSFNDD…SLSDSDLEIL (64 aa). Phosphoserine is present on residues Ser652 and Ser654.

Belongs to the rad17/RAD24 family. In terms of assembly, component of the RAD24-RFC complex which consists of RAD14, RFC2, RFC3, RFC4 and RFC5 and associates with the checkpoint clamp DDC1:MEC3:RAD17 complex. RAD24 interacts with ECO1.

Its subcellular location is the nucleus. Participates in checkpoint pathways arrest of the cell cycle, a mechanism that allows the DNA repair pathways to act to restore the integrity of the DNA prior to DNA synthesis or separation of the replicated chromosomes. Regulates the DNA damage checkpoint pathway throughout the cell cycle, when associated with RCF5. Component of the RFC-like RAD24-RFC complex which loads the checkpoint clamp DDC1:MEC3:RAD17 complex and is involved in DNA repair pathways. During a clamp loading circle, the RFC:clamp complex binds to DNA and the recognition of the double-stranded/single-stranded junction stimulates ATP hydrolysis by RFC. The complex presumably provides bipartite ATP sites in which one subunit supplies a catalytic site for hydrolysis of ATP bound to the neighboring subunit. Dissociation of RFC from the clamp leaves the clamp encircling DNA. This is Checkpoint protein RAD24 (RAD24) from Saccharomyces cerevisiae (strain ATCC 204508 / S288c) (Baker's yeast).